Reading from the N-terminus, the 824-residue chain is Disintegrin and metalloproteinase domain-containing protein 17 (824 aa).

Residues 1–17 (MRQSLLFLTSVVPFVLA) form the signal peptide. Residues 18–214 (PRPPDDPGFG…PEELVHRVKR (197 aa)) constitute a propeptide that is removed on maturation. Residues Asn103, Asn157, and Asn174 are each glycosylated (N-linked (GlcNAc...) asparagine). Residues 182-189 (KVCGYLKV) carry the Cysteine switch motif. Cys184 lines the Zn(2+) pocket. The Extracellular segment spans residues 215–671 (RADPDPMKNT…NTFGKFLADN (457 aa)). Residues 223–474 (NTCKLLVVAD…KAQECFQERS (252 aa)) form the Peptidase M12B domain. Cystine bridges form between Cys225–Cys333, Cys365–Cys469, and Cys423–Cys453. N-linked (GlcNAc...) asparagine glycosylation is present at Asn264. His405 serves as a coordination point for Zn(2+). The active site involves Glu406. Residues His409 and His415 each coordinate Zn(2+). Residues Asn452, Asn498, Asn539, and Asn551 are each glycosylated (N-linked (GlcNAc...) asparagine). One can recognise a Disintegrin domain in the interval 475–563 (NKVCGNSRVD…ECPPPGNAED (89 aa)). 4 disulfide bridges follow: Cys534/Cys555, Cys573/Cys582, Cys578/Cys591, and Cys593/Cys600. The N-linked (GlcNAc...) asparagine glycan is linked to Asn594. Positions 603–671 (CCRDLSGRCV…NTFGKFLADN (69 aa)) are crambin-like. A helical transmembrane segment spans residues 672–692 (IVGSVLVFSLIFWIPFSILVH). Residues 693–824 (CVDKKLDKQY…NRVDSKETEC (132 aa)) lie on the Cytoplasmic side of the membrane. 2 short sequence motifs (SH3-binding) span residues 731 to 738 (PAPQTPGR) and 741 to 748 (PAPVIPSA). The interval 732-824 (APQTPGRLQP…NRVDSKETEC (93 aa)) is disordered. Thr735 carries the post-translational modification Phosphothreonine; by MAPK14. Residues 741 to 752 (PAPVIPSAPAAP) show a composition bias toward low complexity. At Thr761 the chain carries Phosphothreonine. Ser767 is subject to Phosphoserine. Composition is skewed to basic and acidic residues over residues 768–781 (TDSH…EKDP), 791–807 (SFED…EKAA), and 815–824 (NRVDSKETEC). A phosphoserine mark is found at Ser791 and Ser819.

Interacts with MAD2L1, MAPK14 and MUC1. Interacts with iRhom1/RHBDF1 and iRhom2/RHBDF2. Interacts with FRMD8 via its interaction with iRhom1/RHBDF1 and iRhom2/RHBDF2. Interacts with TSPAN8. Zn(2+) serves as cofactor. Post-translationally, the precursor is cleaved by a furin endopeptidase. Phosphorylated. Stimulation by growth factor or phorbol 12-myristate 13-acetate induces phosphorylation of Ser-819 but decreases phosphorylation of Ser-791. Phosphorylation at Thr-735 by MAPK14 is required for ADAM17-mediated ectodomain shedding. As to expression, ubiquitously expressed. Expressed at highest levels in adult heart, placenta, skeletal muscle, pancreas, spleen, thymus, prostate, testes, ovary and small intestine, and in fetal brain, lung, liver and kidney. Expressed in natural killer cells (at protein level).

The protein localises to the cell membrane. It catalyses the reaction Narrow endopeptidase specificity. Cleaves Pro-Leu-Ala-Gln-Ala-|-Val-Arg-Ser-Ser-Ser in the membrane-bound, 26-kDa form of tumor necrosis factor alpha (TNFalpha). Similarly cleaves other membrane-anchored, cell-surface proteins to 'shed' the extracellular domains.. Functionally, transmembrane metalloprotease which mediates the ectodomain shedding of a myriad of transmembrane proteins including adhesion proteins, growth factor precursors and cytokines important for inflammation and immunity. Cleaves the membrane-bound precursor of TNF-alpha to its mature soluble form. Responsible for the proteolytical release of soluble JAM3 from endothelial cells surface. Responsible for the proteolytic release of several other cell-surface proteins, including p75 TNF-receptor, interleukin 1 receptor type II, p55 TNF-receptor, transforming growth factor-alpha, L-selectin, growth hormone receptor, MUC1 and the amyloid precursor protein. Acts as an activator of Notch pathway by mediating cleavage of Notch, generating the membrane-associated intermediate fragment called Notch extracellular truncation (NEXT). Plays a role in the proteolytic processing of ACE2. Plays a role in hemostasis through shedding of GP1BA, the platelet glycoprotein Ib alpha chain. Mediates the proteolytic cleavage of LAG3, leading to release the secreted form of LAG3. Mediates the proteolytic cleavage of IL6R, leading to the release of secreted form of IL6R. Mediates the proteolytic cleavage and shedding of FCGR3A upon NK cell stimulation, a mechanism that allows for increased NK cell motility and detachment from opsonized target cells. Cleaves TREM2, resulting in shedding of the TREM2 ectodomain. This chain is Disintegrin and metalloproteinase domain-containing protein 17, found in Homo sapiens (Human).